The following is a 262-amino-acid chain: F-actin-capping protein subunit alpha (262 aa).

The protein belongs to the F-actin-capping protein alpha subunit family. Heterodimer of an alpha and a beta subunit.

Its subcellular location is the cytoplasm. It is found in the cytoskeleton. In terms of biological role, F-actin-capping proteins bind in a Ca(2+)-independent manner to the fast growing ends of actin filaments (barbed end) thereby blocking the exchange of subunits at these ends. Unlike other capping proteins (such as gelsolin and severin), these proteins do not sever actin filaments. The chain is F-actin-capping protein subunit alpha (CAP1) from Yarrowia lipolytica (strain CLIB 122 / E 150) (Yeast).